The sequence spans 371 residues: Carbamoyl phosphate synthase small chain (371 aa).

The tract at residues 1 to 182 (MGVHKKGYLV…KNPIVHTPKN (182 aa)) is CPSase. L-glutamine is bound by residues Ser49, Gly235, and Gly237. A Glutamine amidotransferase type-1 domain is found at 186–371 (RVVVLDLGVK…EFVKILEGRK (186 aa)). The active-site Nucleophile is Cys263. 5 residues coordinate L-glutamine: Leu264, Gln267, Asn305, Gly307, and Tyr308. Residues His346 and Glu348 contribute to the active site.

The protein belongs to the CarA family. Composed of two chains; the small (or glutamine) chain promotes the hydrolysis of glutamine to ammonia, which is used by the large (or ammonia) chain to synthesize carbamoyl phosphate. Tetramer of heterodimers (alpha,beta)4.

The catalysed reaction is hydrogencarbonate + L-glutamine + 2 ATP + H2O = carbamoyl phosphate + L-glutamate + 2 ADP + phosphate + 2 H(+). It catalyses the reaction L-glutamine + H2O = L-glutamate + NH4(+). Its pathway is amino-acid biosynthesis; L-arginine biosynthesis; carbamoyl phosphate from bicarbonate: step 1/1. The protein operates within pyrimidine metabolism; UMP biosynthesis via de novo pathway; (S)-dihydroorotate from bicarbonate: step 1/3. In terms of biological role, small subunit of the glutamine-dependent carbamoyl phosphate synthetase (CPSase). CPSase catalyzes the formation of carbamoyl phosphate from the ammonia moiety of glutamine, carbonate, and phosphate donated by ATP, constituting the first step of 2 biosynthetic pathways, one leading to arginine and/or urea and the other to pyrimidine nucleotides. The small subunit (glutamine amidotransferase) binds and cleaves glutamine to supply the large subunit with the substrate ammonia. This chain is Carbamoyl phosphate synthase small chain, found in Pyrococcus furiosus (strain ATCC 43587 / DSM 3638 / JCM 8422 / Vc1).